Consider the following 225-residue polypeptide: Small ribosomal subunit protein uS3 (225 aa).

The KH type-2 domain maps to 38 to 106 (IRKFVQNRFN…PVNLNIIEVK (69 aa)).

This sequence belongs to the universal ribosomal protein uS3 family. In terms of assembly, part of the 30S ribosomal subunit. Forms a tight complex with proteins S10 and S14.

Functionally, binds the lower part of the 30S subunit head. Binds mRNA in the 70S ribosome, positioning it for translation. The protein is Small ribosomal subunit protein uS3 of Leptospira interrogans serogroup Icterohaemorrhagiae serovar copenhageni (strain Fiocruz L1-130).